A 353-amino-acid polypeptide reads, in one-letter code: Photosystem II D2 protein (353 aa).

N-acetylthreonine is present on Thr2. The residue at position 2 (Thr2) is a Phosphothreonine. The helical transmembrane segment at 41-61 threads the bilayer; it reads CAYFALGGWFTGTTFVTSWYT. Residue His118 participates in chlorophyll a binding. Residues 125 to 141 form a helical membrane-spanning segment; the sequence is GFMLRQFELARSVQLRP. Residues Gln130 and Asn143 each contribute to the pheophytin a site. A helical transmembrane segment spans residues 153–166; sequence VFVSVFLIYPLGQS. A chlorophyll a-binding site is contributed by His198. Residues 208-228 form a helical membrane-spanning segment; it reads AALLCAIHGATVENTLFEDGD. A plastoquinone is bound by residues His215 and Phe262. Residue His215 participates in Fe cation binding. His269 is a Fe cation binding site. Residues 279 to 295 traverse the membrane as a helical segment; sequence GLWMSALGVVGLALNLR.

This sequence belongs to the reaction center PufL/M/PsbA/D family. As to quaternary structure, PSII is composed of 1 copy each of membrane proteins PsbA, PsbB, PsbC, PsbD, PsbE, PsbF, PsbH, PsbI, PsbJ, PsbK, PsbL, PsbM, PsbT, PsbX, PsbY, PsbZ, Psb30/Ycf12, at least 3 peripheral proteins of the oxygen-evolving complex and a large number of cofactors. It forms dimeric complexes. The cofactor is The D1/D2 heterodimer binds P680, chlorophylls that are the primary electron donor of PSII, and subsequent electron acceptors. It shares a non-heme iron and each subunit binds pheophytin, quinone, additional chlorophylls, carotenoids and lipids. There is also a Cl(-1) ion associated with D1 and D2, which is required for oxygen evolution. The PSII complex binds additional chlorophylls, carotenoids and specific lipids..

The protein localises to the plastid. Its subcellular location is the chloroplast thylakoid membrane. It catalyses the reaction 2 a plastoquinone + 4 hnu + 2 H2O = 2 a plastoquinol + O2. Photosystem II (PSII) is a light-driven water:plastoquinone oxidoreductase that uses light energy to abstract electrons from H(2)O, generating O(2) and a proton gradient subsequently used for ATP formation. It consists of a core antenna complex that captures photons, and an electron transfer chain that converts photonic excitation into a charge separation. The D1/D2 (PsbA/PsbD) reaction center heterodimer binds P680, the primary electron donor of PSII as well as several subsequent electron acceptors. D2 is needed for assembly of a stable PSII complex. The polypeptide is Photosystem II D2 protein (Barbarea verna (Land cress)).